The sequence spans 423 residues: AP-1 complex subunit mu-1 (423 aa).

Ser-2 carries the post-translational modification N-acetylserine. Thr-152, Thr-154, and Thr-223 each carry phosphothreonine. An MHD domain is found at 168–421 (KNEVFLDVIE…ITQNGDYQLR (254 aa)).

Belongs to the adaptor complexes medium subunit family. Adaptor protein complex 1 (AP-1) is a heterotetramer composed of two large adaptins (gamma-type subunit AP1G1 and beta-type subunit AP1B1), a medium adaptin (mu-type subunit AP1M1 or AP1M2) and a small adaptin (sigma-type subunit AP1S1 or AP1S2 or AP1S3). Interacts with MARCHF11. Phosphorylation of membrane-bound AP1M1/AP1M2 increases its affinity for sorting signals.

It is found in the cytoplasmic vesicle. It localises to the clathrin-coated vesicle membrane. Its subcellular location is the golgi apparatus. Its function is as follows. Subunit of clathrin-associated adaptor protein complex 1 that plays a role in protein sorting in the trans-Golgi network (TGN) and endosomes. The AP complexes mediate the recruitment of clathrin to membranes and the recognition of sorting signals within the cytosolic tails of transmembrane cargo molecules. The sequence is that of AP-1 complex subunit mu-1 from Bos taurus (Bovine).